A 165-amino-acid polypeptide reads, in one-letter code: MPAKTTSARLTHLDDAGLPTMVDVSDKQVTARSATAESRVHFPAAVAAQLRANGLRSAKGGIVETAVIAGTMAVKRTHELIPFCHPLPIDGCRFEIDWAGAHVLQIVCTVRCVHRTGVEMEALTGASVAALTVYDMCKALSHSMRIGPTKLLSKRGGKRDIGAAR.

Substrate-binding positions include 83–85 (FCH) and 120–121 (ME). The active site involves Asp135.

Belongs to the MoaC family. Homohexamer; trimer of dimers.

The catalysed reaction is (8S)-3',8-cyclo-7,8-dihydroguanosine 5'-triphosphate = cyclic pyranopterin phosphate + diphosphate. It participates in cofactor biosynthesis; molybdopterin biosynthesis. Catalyzes the conversion of (8S)-3',8-cyclo-7,8-dihydroguanosine 5'-triphosphate to cyclic pyranopterin monophosphate (cPMP). The protein is Cyclic pyranopterin monophosphate synthase of Xanthomonas campestris pv. campestris (strain B100).